Consider the following 567-residue polypeptide: Multidrug transporter TPO1_1 (567 aa).

Residues 1–71 (MVEEISPKYT…NRRMSRILTG (71 aa)) are disordered. Residue Asn120 is glycosylated (N-linked (GlcNAc...) asparagine). 12 helical membrane passes run 128 to 148 (IICI…SIFA), 157 to 177 (IYHV…FGFA), 194 to 214 (GVLV…ATSK), 224 to 244 (FFGG…FADM), 253 to 273 (AICL…VMGS), 283 to 303 (WLEY…ALTF), 358 to 378 (PLLL…YLML), 396 to 416 (ELPY…LWYF), 436 to 456 (LIPM…FCWT), 471 to 491 (AGSF…NYII), 498 to 520 (AASA…PLFA), and 531 to 551 (WAGL…LFFL).

Belongs to the major facilitator superfamily. DHA1 family. Polyamines/proton antiporter (TC 2.A.1.2.16) subfamily.

Its subcellular location is the cell membrane. Functionally, multidrug resistance transporter involved in resistance to azole antifungal drugs such as the imidazoles miconazole, ketoconazole, and tioconazole; as well as the triazoles itraconazole and fluconazole. Also plays a role in the resistance to other antifungal drug families such as the polyene amphotericin B, the pyrimide analog flucytosine, the fungicide mancozeb, and the polyamine spermine. Decreases the intracellular accumulation of clotrimazole by mediating its extrusion from cells. Involved in virulence by conferring resistance to the human antimicrobial peptide histatin-5. The polypeptide is Multidrug transporter TPO1_1 (Candida glabrata (strain ATCC 2001 / BCRC 20586 / JCM 3761 / NBRC 0622 / NRRL Y-65 / CBS 138) (Yeast)).